The following is a 383-amino-acid chain: Adaptive-response sensory kinase SasA (383 aa).

One can recognise a Histidine kinase domain in the interval 161–383 (MLAHDLRSPL…SFHFTLPVYR (223 aa)). H164 carries the post-translational modification Phosphohistidine; by autocatalysis.

As to quaternary structure, homooligomerizes. Interacts with KaiC1. Interacts with KaiC1 and RpaA. Binds to the B-loop in the CI domain of KaiC; SasA and KaiB compete to bind to the CI domain.

It carries out the reaction ATP + protein L-histidine = ADP + protein N-phospho-L-histidine.. In terms of biological role, member of the two-component regulatory system SasA/RpaA involved in genome-wide circadian gene expression. One of several clock output pathways. Participates in the Kai clock protein complex, the main circadian regulator in cyanobacteria, via its interaction with KaiC. KaiC enhances the autophosphorylation activity of SasA, which then transfers its phosphate group to RpaA to activate it. In addition to its output function, recruits fold-shifted KaiB (KaiB(fs)) to KaiC to cooperatively form the KaiB(6):KaiC(6) complex (independent of SasA kinase activity). Required for robustness of the circadian rhythm of gene expression and is involved in clock output, also required for adaptation to light/dark cycles. Functionally, plays an important role in glucose metabolism, important for expression of genes involved in glycolysis, gluconeogenesis, the oxidative pentose phosphate pathway, and glycogen metabolism. Required for heterotrophic growth. Overexpression from the psbAII promoter leads to altered levels of genes involved in carbon metabolism, increased levels of transcripts for clock oscillator genes in the light and the dark, complete loss of glycogen accumulation, decreased levels of metabolites of sugar catabolism and increased levels of amino acids in the light and increased levels of SigE protein. In Synechocystis sp. (strain ATCC 27184 / PCC 6803 / Kazusa), this protein is Adaptive-response sensory kinase SasA.